Here is a 90-residue protein sequence, read N- to C-terminus: Progonadoliberin-3 (90 aa).

The first 23 residues, 1–23, serve as a signal peptide directing secretion; that stretch reads MEASSRVTVQVLLLALVVQVTLS. Q24 bears the Pyrrolidone carboxylic acid mark. The residue at position 33 (G33) is a Glycine amide.

Belongs to the GnRH family.

The protein resides in the secreted. Functionally, stimulates the secretion of gonadotropins. The polypeptide is Progonadoliberin-3 (gnrh3) (Sparus aurata (Gilthead sea bream)).